A 353-amino-acid polypeptide reads, in one-letter code: Keratocan (353 aa).

Positions 1-21 (MMTLKVCPSLLLLFLVHSVWT) are cleaved as a signal peptide. In terms of domain architecture, LRRNT spans 34-72 (EHWSHYTFECPQECFCPPSFPNALYCDNKGLKEIPAIPA). Disulfide bonds link C43–C49 and C47–C59. LRR repeat units lie at residues 73-94 (RIWY…PFVN), 97-118 (HLRW…SGVL), 123-143 (RLLY…PLPV), 144-165 (GLEQ…VFSN), 168-188 (NLTM…QSDT), 194-214 (SLMQ…SIPA), 215-236 (NTLQ…YFSA), 239-262 (KVTF…GFNV), 264-283 (SILD…PINA), and 284-305 (HLEH…QICP). N94 carries an N-linked (GlcNAc...) (keratan sulfate) asparagine glycan. A glycan (N-linked (GlcNAc...) asparagine) is linked at N168. N-linked (GlcNAc...) (keratan sulfate) asparagine glycans are attached at residues N223 and N261. N299 is a glycosylation site (N-linked (GlcNAc...) asparagine). A disulfide bridge links C304 with C344.

It belongs to the small leucine-rich proteoglycan (SLRP) family. SLRP class II subfamily. In terms of processing, binds keratan sulfate chains.

The protein resides in the secreted. It localises to the extracellular space. It is found in the extracellular matrix. Its function is as follows. Plays an important role in generating and maintaining a transparent matrix within the corneal stroma. This Gallus gallus (Chicken) protein is Keratocan (KERA).